The following is a 498-amino-acid chain: ATP synthase subunit beta, chloroplastic (498 aa).

172–179 is a binding site for ATP; the sequence is GGAGVGKT.

Belongs to the ATPase alpha/beta chains family. In terms of assembly, F-type ATPases have 2 components, CF(1) - the catalytic core - and CF(0) - the membrane proton channel. CF(1) has five subunits: alpha(3), beta(3), gamma(1), delta(1), epsilon(1). CF(0) has four main subunits: a(1), b(1), b'(1) and c(9-12).

It localises to the plastid. It is found in the chloroplast thylakoid membrane. It carries out the reaction ATP + H2O + 4 H(+)(in) = ADP + phosphate + 5 H(+)(out). Functionally, produces ATP from ADP in the presence of a proton gradient across the membrane. The catalytic sites are hosted primarily by the beta subunits. The sequence is that of ATP synthase subunit beta, chloroplastic from Morus indica (Mulberry).